The following is a 500-amino-acid chain: L-arabinose isomerase (500 aa).

Mn(2+) is bound by residues glutamate 306, glutamate 333, histidine 349, and histidine 448.

It belongs to the arabinose isomerase family. The cofactor is Mn(2+).

The enzyme catalyses beta-L-arabinopyranose = L-ribulose. Its pathway is carbohydrate degradation; L-arabinose degradation via L-ribulose; D-xylulose 5-phosphate from L-arabinose (bacterial route): step 1/3. In terms of biological role, catalyzes the conversion of L-arabinose to L-ribulose. The protein is L-arabinose isomerase of Shewanella sp. (strain ANA-3).